The following is a 179-amino-acid chain: UPF0227 protein Sbal_2415 (179 aa).

Belongs to the UPF0227 family.

The protein is UPF0227 protein Sbal_2415 of Shewanella baltica (strain OS155 / ATCC BAA-1091).